We begin with the raw amino-acid sequence, 869 residues long: Bifunctional uridylyltransferase/uridylyl-removing enzyme (869 aa).

Residues 1–331 (MPTNLPALPM…FPSESQVTRV (331 aa)) are uridylyltransferase. The segment at 332–688 (INERFVERQG…ARISPAGEGL (357 aa)) is uridylyl-removing. Residues 450-572 (VDQHILMVVR…VGDERHLTAL (123 aa)) form the HD domain. 2 consecutive ACT domains span residues 689 to 773 (QVAV…PSQG) and 800 to 869 (LLSL…ALEI).

It belongs to the GlnD family. Mg(2+) serves as cofactor.

It catalyses the reaction [protein-PII]-L-tyrosine + UTP = [protein-PII]-uridylyl-L-tyrosine + diphosphate. The enzyme catalyses [protein-PII]-uridylyl-L-tyrosine + H2O = [protein-PII]-L-tyrosine + UMP + H(+). With respect to regulation, uridylyltransferase (UTase) activity is inhibited by glutamine, while glutamine activates uridylyl-removing (UR) activity. In terms of biological role, modifies, by uridylylation and deuridylylation, the PII regulatory proteins (GlnB and homologs), in response to the nitrogen status of the cell that GlnD senses through the glutamine level. Under low glutamine levels, catalyzes the conversion of the PII proteins and UTP to PII-UMP and PPi, while under higher glutamine levels, GlnD hydrolyzes PII-UMP to PII and UMP (deuridylylation). Thus, controls uridylylation state and activity of the PII proteins, and plays an important role in the regulation of nitrogen assimilation and metabolism. This Cupriavidus pinatubonensis (strain JMP 134 / LMG 1197) (Cupriavidus necator (strain JMP 134)) protein is Bifunctional uridylyltransferase/uridylyl-removing enzyme.